A 96-amino-acid chain; its full sequence is Pore-forming peptide amoebapore B (96 aa).

The N-terminal stretch at Met-1 to Glu-19 is a signal peptide. In terms of domain architecture, Saposin B-type spans Gly-20 to Cys-96. Cystine bridges form between Cys-24–Cys-96, Cys-27–Cys-90, and Cys-54–Cys-65.

In terms of assembly, monomer. Homodimer. Hexamer; formed during insertion in the membrane.

It is found in the cytoplasmic granule. Functionally, forms pores in the cell membrane of host cells. Has antibacterial activity against M.luteus, no activity against E.coli. Implicated in the cytolytic activity of the parasite. The polypeptide is Pore-forming peptide amoebapore B (Entamoeba histolytica (strain ATCC 30459 / HM-1:IMSS / ABRM)).